The chain runs to 338 residues: Nucleoid-associated protein PA14_59050 (338 aa).

The protein belongs to the YejK family.

It localises to the cytoplasm. Its subcellular location is the nucleoid. The polypeptide is Nucleoid-associated protein PA14_59050 (Pseudomonas aeruginosa (strain UCBPP-PA14)).